Reading from the N-terminus, the 65-residue chain is Large ribosomal subunit protein bL35 (65 aa).

The segment covering 1-43 (MPKMKTRRGAAKRFAKTGSGKFKRRKQGLRHILTKKTAKRKSR) has biased composition (basic residues). Positions 1–49 (MPKMKTRRGAAKRFAKTGSGKFKRRKQGLRHILTKKTAKRKSRLGQSAT) are disordered.

It belongs to the bacterial ribosomal protein bL35 family.

This is Large ribosomal subunit protein bL35 from Maridesulfovibrio salexigens (strain ATCC 14822 / DSM 2638 / NCIMB 8403 / VKM B-1763) (Desulfovibrio salexigens).